We begin with the raw amino-acid sequence, 557 residues long: MSLSTLKRDHIKKNLRDTEYDVVIVGGGITGAGIALDASNRGMKVALVEMQDFAQGTSSRSTKLVHGGLRYLKQLQVGVVAETGKERAIVYENGPHVTTPEWMLLPMHKGGTFGKFSTSIGLAMYDRLAGVKKSERKKMLSKQETLNKEPLVKRDGLKGGGYYVEYRTDDARLTIEVMKKAAENGAEILNYTKSEHFTYDSNKKVNGIEVLDMIDGETYAIKAKKVINASGPWVDEVRSGDYARNNKQLRLTKGVHVVIDQSKFPLGQAVYFDTEKDGRMIFAIPREGKAYVGTTDTFYDNEKATPLTTQEDRDYLINAINYMFPTVNVKDEDIESTWAGIRPLILEKGKDPSEISRKDEVWEGESGLLTIAGGKLTGYRHMALEIVDLLAKRLKQEYGLKFESCATKNLKISGGDVGGSKNFEHFVEQKVDAAKGFGIDEDVARRLASKYGSNVDQLFNIAQTAPYHDSKLPLEIYVELVYSIQQEMVYKPTDFLVRRSGKLYFNIQDVLDYKNAVIDVMADMLNYSETQKEAYTEEVEVAIDEARTGNDQPATKA.

21-49 (DVVIVGGGITGAGIALDASNRGMKVALVE) lines the FAD pocket.

It belongs to the FAD-dependent glycerol-3-phosphate dehydrogenase family. It depends on FAD as a cofactor.

The protein localises to the cytoplasm. It catalyses the reaction a quinone + sn-glycerol 3-phosphate = dihydroxyacetone phosphate + a quinol. It participates in polyol metabolism; glycerol degradation via glycerol kinase pathway; glycerone phosphate from sn-glycerol 3-phosphate (aerobic route): step 1/1. This chain is Aerobic glycerol-3-phosphate dehydrogenase (glpD), found in Staphylococcus epidermidis (strain ATCC 35984 / DSM 28319 / BCRC 17069 / CCUG 31568 / BM 3577 / RP62A).